Reading from the N-terminus, the 835-residue chain is Leucine--tRNA ligase (835 aa).

A 'HIGH' region motif is present at residues 36 to 46; it reads PYPSGKIHVGH. A 'KMSKS' region motif is present at residues 602 to 606; it reads KMSKS. K605 lines the ATP pocket.

Belongs to the class-I aminoacyl-tRNA synthetase family.

Its subcellular location is the cytoplasm. It catalyses the reaction tRNA(Leu) + L-leucine + ATP = L-leucyl-tRNA(Leu) + AMP + diphosphate. This chain is Leucine--tRNA ligase, found in Rickettsia rickettsii (strain Iowa).